The chain runs to 528 residues: DEAD-box ATP-dependent RNA helicase 6 (528 aa).

Composition is skewed to low complexity over residues 1–15 (MNNN…PPGI) and 65–80 (QQYV…QQQQ). The interval 1–80 (MNNNNNNRGR…GYPQQIQQQQ (80 aa)) is disordered. Residues 154–182 (NEFEDYFLKRDLLRGIYEKGFEKPSPIQE) carry the Q motif motif. In terms of domain architecture, Helicase ATP-binding spans 185–355 (IPIALTGSDI…DRYLKKPYII (171 aa)). Residue 198-205 (AKNGTGKT) participates in ATP binding. Phosphothreonine is present on Thr260. A DEAD box motif is present at residues 303–306 (DEAD). In terms of domain architecture, Helicase C-terminal spans 365–525 (GVTQYYAFVE…PIPSLIDKAI (161 aa)).

The protein belongs to the DEAD box helicase family. DDX6/DHH1 subfamily.

It localises to the cytoplasm. The protein resides in the P-body. The catalysed reaction is ATP + H2O = ADP + phosphate + H(+). Its function is as follows. ATP-dependent RNA helicase involved in mRNA turnover, and more specifically in mRNA decapping. This is DEAD-box ATP-dependent RNA helicase 6 (RH6) from Arabidopsis thaliana (Mouse-ear cress).